The sequence spans 476 residues: Eukaryotic translation initiation factor 3 subunit L (476 aa).

In terms of domain architecture, PCI spans 257-452 (DAIRMFSHIL…DLDYALENDL (196 aa)).

It belongs to the eIF-3 subunit L family. Component of the eukaryotic translation initiation factor 3 (eIF-3) complex.

The protein localises to the cytoplasm. Its function is as follows. Component of the eukaryotic translation initiation factor 3 (eIF-3) complex, which is involved in protein synthesis of a specialized repertoire of mRNAs and, together with other initiation factors, stimulates binding of mRNA and methionyl-tRNAi to the 40S ribosome. The eIF-3 complex specifically targets and initiates translation of a subset of mRNAs involved in cell proliferation. In Neosartorya fischeri (strain ATCC 1020 / DSM 3700 / CBS 544.65 / FGSC A1164 / JCM 1740 / NRRL 181 / WB 181) (Aspergillus fischerianus), this protein is Eukaryotic translation initiation factor 3 subunit L.